The sequence spans 346 residues: Putative D-xylulose reductase (346 aa).

Zn(2+) contacts are provided by Cys-39, His-64, and Glu-150.

This sequence belongs to the zinc-containing alcohol dehydrogenase family. The cofactor is Zn(2+).

The enzyme catalyses xylitol + NAD(+) = D-xylulose + NADH + H(+). The polypeptide is Putative D-xylulose reductase (Rhizobium meliloti (strain 1021) (Ensifer meliloti)).